Here is a 753-residue protein sequence, read N- to C-terminus: 5-methyltetrahydropteroyltriglutamate--homocysteine methyltransferase (753 aa).

Residues 17–20 (RELK) and Lys117 each bind 5-methyltetrahydropteroyltri-L-glutamate. L-homocysteine contacts are provided by residues 431–433 (IGS) and Glu484. L-methionine is bound by residues 431–433 (IGS) and Glu484. Residues 515–516 (RC) and Trp561 each bind 5-methyltetrahydropteroyltri-L-glutamate. Asp599 contacts L-homocysteine. L-methionine is bound at residue Asp599. A 5-methyltetrahydropteroyltri-L-glutamate-binding site is contributed by Glu605. The Zn(2+) site is built by His641, Cys643, and Glu665. The active-site Proton donor is His694. Zn(2+) is bound at residue Cys726.

Belongs to the vitamin-B12 independent methionine synthase family. Requires Zn(2+) as cofactor.

It carries out the reaction 5-methyltetrahydropteroyltri-L-glutamate + L-homocysteine = tetrahydropteroyltri-L-glutamate + L-methionine. Its pathway is amino-acid biosynthesis; L-methionine biosynthesis via de novo pathway; L-methionine from L-homocysteine (MetE route): step 1/1. Functionally, catalyzes the transfer of a methyl group from 5-methyltetrahydrofolate to homocysteine resulting in methionine formation. The sequence is that of 5-methyltetrahydropteroyltriglutamate--homocysteine methyltransferase from Escherichia coli (strain SMS-3-5 / SECEC).